Here is a 298-residue protein sequence, read N- to C-terminus: Protease HtpX homolog (298 aa).

Helical transmembrane passes span 14–34 and 39–59; these read VVLLVVFFALLALIGASAGYL and YAMGLVLALVIGVIYATSMIF. His-143 is a binding site for Zn(2+). Residue Glu-144 is part of the active site. His-147 is a binding site for Zn(2+). 2 helical membrane passes run 158–178 and 197–217; these read IAVALASAVTVISSIGGRMLW and IITLLLSLLSLLLAPLVASLI. Residue Glu-226 participates in Zn(2+) binding.

It belongs to the peptidase M48B family. It depends on Zn(2+) as a cofactor.

The protein localises to the cell membrane. This chain is Protease HtpX homolog, found in Streptococcus pyogenes serotype M1.